Consider the following 292-residue polypeptide: Probable endonuclease LCL3 (292 aa).

The helical transmembrane segment at 41 to 58 threads the bilayer; it reads YFSVAAFAAGSLSLAASY. Residues 83 to 247 form the TNase-like domain; the sequence is RWIKGRVTSV…KDARRGIWAK (165 aa). The active site involves R132. Position 137 (D137) interacts with Ca(2+). Catalysis depends on residues E140 and R180. The segment at 256–282 is disordered; it reads EYKRRYAQAADGGEPPSKARAEKEQKR. Positions 272–282 are enriched in basic and acidic residues; it reads SKARAEKEQKR.

The protein belongs to the LCL3 family.

Its subcellular location is the mitochondrion. The protein resides in the membrane. The sequence is that of Probable endonuclease LCL3 (LCL3) from Schizophyllum commune (strain H4-8 / FGSC 9210) (Split gill fungus).